The following is a 127-amino-acid chain: Phosphoribosyl-AMP cyclohydrolase (127 aa).

Position 83 (D83) interacts with Mg(2+). C84 contacts Zn(2+). Residues D85 and D87 each coordinate Mg(2+). Zn(2+) contacts are provided by C100 and C107.

It belongs to the PRA-CH family. In terms of assembly, homodimer. It depends on Mg(2+) as a cofactor. Zn(2+) is required as a cofactor.

The protein localises to the cytoplasm. The catalysed reaction is 1-(5-phospho-beta-D-ribosyl)-5'-AMP + H2O = 1-(5-phospho-beta-D-ribosyl)-5-[(5-phospho-beta-D-ribosylamino)methylideneamino]imidazole-4-carboxamide. It functions in the pathway amino-acid biosynthesis; L-histidine biosynthesis; L-histidine from 5-phospho-alpha-D-ribose 1-diphosphate: step 3/9. In terms of biological role, catalyzes the hydrolysis of the adenine ring of phosphoribosyl-AMP. The protein is Phosphoribosyl-AMP cyclohydrolase of Methanocaldococcus jannaschii (strain ATCC 43067 / DSM 2661 / JAL-1 / JCM 10045 / NBRC 100440) (Methanococcus jannaschii).